An 87-amino-acid polypeptide reads, in one-letter code: MKGVCTRKVLYFFMAVILFVAIVASEDTENRNPAMAMPLQRMEQEVEKVSSRCGPVACPGRFCGSDLGACRPPWCCRGCSCSFCCKL.

Positions 1–25 (MKGVCTRKVLYFFMAVILFVAIVAS) are cleaved as a signal peptide. Positions 26 to 45 (EDTENRNPAMAMPLQRMEQE) are excised as a propeptide.

Belongs to the xibalbin-2 family. In terms of processing, contains 5 disulfide bonds. Expressed by the venom gland. Not found in the whole body.

It localises to the secreted. Functionally, probable neurotoxin. Moderately inhibits voltage-gated potassium channels (Kv1.1/KCNA1, Kv1.2/KCNA2, Kv1.3/KCNA3, and Kv1.6/KCNA6, with the highest toxicity against Kv1.6 (73.2% inhibition at 1 uM)) and weakly inhibits sodium channels (Nav1.4/SCN4A). Does not activate protein kinase A type II (PKA-II) and MAP kinase Erk1/2 in sensory neurons. Does not show cytotoxic activity. Does not have an impact on Ca2+, cAMP, and NO signaling in the cell types analyzed. Does not interfere with the adhesion of leukocytes to endothelial cells. In terms of biological role, moderately inhibits voltage-gated potassium channels (Kv1.1/KCNA1, Kv1.2/KCNA2, Kv1.3/KCNA3, and Kv1.6/KCNA6, with the highest toxicity against Kv1.6 (75.9% inhibition at 1 uM)). Does not activate protein kinase A type II (PKA-II) and MAP kinase Erk1/2 in sensory neurons. Does not show cytotoxic activity. Does not have an impact on Ca2+, cAMP, and NO signaling in the cell types analyzed. Does not interfere with the adhesion of leukocytes to endothelial cells. The protein is Xibalbin-2 of Xibalbanus tulumensis (Blind cave remipede).